Reading from the N-terminus, the 735-residue chain is Post-transcriptional regulator MKT1 (735 aa).

Positions 475 to 722 (QVIYNTMEET…ANERMKRAQK (248 aa)) are interaction with PBP1.

The protein belongs to the XPG/RAD2 endonuclease family. Forms a complex composed of at least MKT1, PBP1, XAC1 and LSM12. Within the complex, interacts (via C-terminus) with PBP1; the interaction is direct. Interacts with RNA-binding protein ZC3H11 (via MKT1-binding motif); the interaction is direct. May interact with RNA-binding proteins CFB1 and CFB2. Interacts with the EIF4E6-EIF4G5 translation initiation complex via EIF4G5; the interaction with EIF4G5 is direct.

Its subcellular location is the cytoplasm. The protein localises to the cytosol. It localises to the stress granule. Its function is as follows. Involved in post-transcriptional regulation of gene expression. Promotes mRNA stabilization by recruiting a complex containing PBP1, LSM12 and XAC1 to mRNAs. Recruited to mRNAs by sequence-specific RNA binding proteins. May regulate translation through interactions with the EIF4E6-EIF4G5 translation initiation complex. The polypeptide is Post-transcriptional regulator MKT1 (Trypanosoma brucei brucei (strain 927/4 GUTat10.1)).